We begin with the raw amino-acid sequence, 462 residues long: Cytochrome b558/566 subunit A (462 aa).

Over 1–8 (MSLKIKSK) the chain is Cytoplasmic. A helical membrane pass occupies residues 9–26 (ITIGVLLIIFLLSIIFTL). Over 27 to 431 (ENVSLAQTSP…TSTSPVTTIS (405 aa)) the chain is Extracellular. N28, N65, N91, N121, N144, N164, N174, N183, N211, N278, N279, N293, N316, N339, N353, and N376 each carry an N-linked (GlcNAc...) asparagine glycan. Residues 432–456 (SAIPPVTLYVTIIGVVVALVALVIL) traverse the membrane as a helical segment. Residues 457–462 (YVVFRR) lie on the Cytoplasmic side of the membrane.

Requires heme as cofactor. Post-translationally, N-glycosylated on at least seven Asn residues by identical hexasaccharide units composed of Man, GlcNAc, Glc and 6-deoxy-6-sulfoglucose residues in the molar ration of 2:2:1:1. O-glycosylated on probably as many as 35 positions by single Man residues.

It is found in the cell membrane. Functionally, monoheme cytochrome whose physiological function is not yet clear. The chain is Cytochrome b558/566 subunit A (cbsA) from Sulfolobus acidocaldarius (strain ATCC 33909 / DSM 639 / JCM 8929 / NBRC 15157 / NCIMB 11770).